We begin with the raw amino-acid sequence, 339 residues long: Phenylalanine--tRNA ligase alpha subunit (339 aa).

Glutamate 254 contributes to the Mg(2+) binding site.

The protein belongs to the class-II aminoacyl-tRNA synthetase family. Phe-tRNA synthetase alpha subunit type 1 subfamily. In terms of assembly, tetramer of two alpha and two beta subunits. The cofactor is Mg(2+).

It localises to the cytoplasm. It catalyses the reaction tRNA(Phe) + L-phenylalanine + ATP = L-phenylalanyl-tRNA(Phe) + AMP + diphosphate + H(+). The protein is Phenylalanine--tRNA ligase alpha subunit of Clostridium novyi (strain NT).